The sequence spans 304 residues: Probable endonuclease 4 (304 aa).

Residues His75, His115, Glu151, Asp185, His188, His221, Asp234, His236, and Glu266 each contribute to the Zn(2+) site.

This sequence belongs to the AP endonuclease 2 family. Requires Zn(2+) as cofactor.

The enzyme catalyses Endonucleolytic cleavage to 5'-phosphooligonucleotide end-products.. Functionally, endonuclease IV plays a role in DNA repair. It cleaves phosphodiester bonds at apurinic or apyrimidinic (AP) sites, generating a 3'-hydroxyl group and a 5'-terminal sugar phosphate. The chain is Probable endonuclease 4 from Ureaplasma urealyticum serovar 10 (strain ATCC 33699 / Western).